The chain runs to 96 residues: Aspartyl/glutamyl-tRNA(Asn/Gln) amidotransferase subunit C (96 aa).

The protein belongs to the GatC family. As to quaternary structure, heterotrimer of A, B and C subunits.

It carries out the reaction L-glutamyl-tRNA(Gln) + L-glutamine + ATP + H2O = L-glutaminyl-tRNA(Gln) + L-glutamate + ADP + phosphate + H(+). The enzyme catalyses L-aspartyl-tRNA(Asn) + L-glutamine + ATP + H2O = L-asparaginyl-tRNA(Asn) + L-glutamate + ADP + phosphate + 2 H(+). Functionally, allows the formation of correctly charged Asn-tRNA(Asn) or Gln-tRNA(Gln) through the transamidation of misacylated Asp-tRNA(Asn) or Glu-tRNA(Gln) in organisms which lack either or both of asparaginyl-tRNA or glutaminyl-tRNA synthetases. The reaction takes place in the presence of glutamine and ATP through an activated phospho-Asp-tRNA(Asn) or phospho-Glu-tRNA(Gln). The sequence is that of Aspartyl/glutamyl-tRNA(Asn/Gln) amidotransferase subunit C from Sulfurimonas denitrificans (strain ATCC 33889 / DSM 1251) (Thiomicrospira denitrificans (strain ATCC 33889 / DSM 1251)).